Here is a 511-residue protein sequence, read N- to C-terminus: Lysine--tRNA ligase (511 aa).

2 residues coordinate Mg(2+): Glu421 and Glu428.

It belongs to the class-II aminoacyl-tRNA synthetase family. As to quaternary structure, homodimer. Mg(2+) is required as a cofactor.

The protein localises to the cytoplasm. The enzyme catalyses tRNA(Lys) + L-lysine + ATP = L-lysyl-tRNA(Lys) + AMP + diphosphate. The polypeptide is Lysine--tRNA ligase (Aeromonas hydrophila subsp. hydrophila (strain ATCC 7966 / DSM 30187 / BCRC 13018 / CCUG 14551 / JCM 1027 / KCTC 2358 / NCIMB 9240 / NCTC 8049)).